Consider the following 911-residue polypeptide: Nitrate reductase [NADH] (911 aa).

The segment covering 1–10 has biased composition (polar residues); sequence MAASVENRQY. The tract at residues 1–71 is disordered; the sequence is MAASVENRQY…SEDEDDDDEK (71 aa). A compositionally biased stretch (acidic residues) spans 61–71; it reads SSEDEDDDDEK. Cys-188 contacts Mo-molybdopterin. One can recognise a Cytochrome b5 heme-binding domain in the interval 536–611; sequence SKMYSMSEVR…LEDFRIGELI (76 aa). Positions 571 and 594 each coordinate heme. In terms of domain architecture, FAD-binding FR-type spans 654 to 766; the sequence is REKIPCKLVD…KGPLGHIEYQ (113 aa). Residues 706 to 709, 723 to 727, Phe-728, Phe-735, 740 to 742, and Thr-793 each bind FAD; these read RAYT, VVKIY, and QMS.

This sequence belongs to the nitrate reductase family. In terms of assembly, homodimer. It depends on FAD as a cofactor. The cofactor is heme. Mo-molybdopterin serves as cofactor.

The catalysed reaction is nitrite + NAD(+) + H2O = nitrate + NADH + H(+). Its function is as follows. Nitrate reductase is a key enzyme involved in the first step of nitrate assimilation in plants, fungi and bacteria. The sequence is that of Nitrate reductase [NADH] (NIA) from Solanum lycopersicum (Tomato).